The chain runs to 79 residues: UPF0154 protein SUB0399 (79 aa).

A helical transmembrane segment spans residues 4-24 (AIWILLIVLALIGGLFGGVFI).

The protein belongs to the UPF0154 family.

It is found in the cell membrane. This chain is UPF0154 protein SUB0399, found in Streptococcus uberis (strain ATCC BAA-854 / 0140J).